The chain runs to 216 residues: Thymidylate kinase (216 aa).

9–16 (GIEGSGKT) is a binding site for ATP.

The protein belongs to the thymidylate kinase family.

The catalysed reaction is dTMP + ATP = dTDP + ADP. Phosphorylation of dTMP to form dTDP in both de novo and salvage pathways of dTTP synthesis. The sequence is that of Thymidylate kinase from Syntrophotalea carbinolica (strain DSM 2380 / NBRC 103641 / GraBd1) (Pelobacter carbinolicus).